The sequence spans 500 residues: POU domain, class 3, transcription factor 3 (500 aa).

The segment covering 32 to 52 (GGGGGGGGGGGGAGGGGGGMQ) has biased composition (gly residues). 4 disordered regions span residues 32–63 (GGGG…SGAY), 122–190 (WSGS…WGAA), 231–319 (NGML…TPTS), and 461–500 (EKRM…TSVQ). Composition is skewed to pro residues over residues 134 to 146 (QQPP…PPQG) and 171 to 181 (HLGPPPPPPHQ). Gly residues predominate over residues 241–251 (GGGGGGAGGGA). The span at 270–287 (HHHHHHHHAHPHPPHPHH) shows a compositional bias: basic residues. Residues 293–303 (HHGGGGGGAGP) are compositionally biased toward gly residues. One can recognise a POU-specific domain in the interval 314–388 (EDTPTSDDLE…LLNKWLEEAD (75 aa)). A DNA-binding region (homeobox) is located at residues 406-465 (KRKKRTSIEVSVKGALESHFLKCPKPSAQEITNLADSLQLEKEVVRVWFCNRRQKEKRMT). Positions 468 to 486 (GIQQQTPDDVYSQVGTVSA) are enriched in polar residues.

It belongs to the POU transcription factor family. Class-3 subfamily. As to quaternary structure, homodimer. Brain.

It is found in the nucleus. Transcription factor that acts synergistically with SOX11 and SOX4. Plays a role in neuronal development. Is implicated in an enhancer activity at the embryonic met-mesencephalic junction; the enhancer element contains the octamer motif (5'-ATTTGCAT-3'). The polypeptide is POU domain, class 3, transcription factor 3 (Homo sapiens (Human)).